The sequence spans 227 residues: Small ribosomal subunit protein uS5 (227 aa).

Positions Met-1–Trp-22 are disordered. Residues Arg-7 to Asn-18 are compositionally biased toward low complexity. The S5 DRBM domain maps to Leu-63–Val-126.

Belongs to the universal ribosomal protein uS5 family. Part of the 30S ribosomal subunit. Contacts protein S4.

Its function is as follows. With S4 and S12 plays an important role in translational accuracy. In Methanosphaera stadtmanae (strain ATCC 43021 / DSM 3091 / JCM 11832 / MCB-3), this protein is Small ribosomal subunit protein uS5.